Consider the following 719-residue polypeptide: Probable phosphatidylinositol phosphate kinase DDB_G0267588 (719 aa).

The disordered stretch occupies residues 47 to 261; the sequence is VFSPIPPPPS…SDSPNRVRLN (215 aa). Low complexity-rich tracts occupy residues 57-77 and 87-104; these read TTDN…TDNT and IENN…PNSI. The span at 107–129 shows a compositional bias: basic and acidic residues; the sequence is ANKKDSIELEEDKEHSIKRKDGS. The span at 172–184 shows a compositional bias: polar residues; it reads FDATNDNHNPQEV. Residues 199-217 are compositionally biased toward low complexity; it reads TTTTTTTTTTTTSTNSTSN. 2 stretches are compositionally biased toward polar residues: residues 218-228 and 248-261; these read KLPNNGDNTVS and ASGS…VRLN. Phosphothreonine is present on T262. Residues 316-718 form the PIPK domain; it reads NAVGKSMGTE…RFQEFLSTII (403 aa). The segment at 579–638 is disordered; that stretch reads RENEPPSPSLLRSTLEDSSDFESPSMEQSSAGQQQQQRGSGNYDNSGAGRDSTTGGAAPK. Residues 606–619 show a composition bias toward low complexity; sequence QSSAGQQQQQRGSG.

Phosphorylated at Thr-262 by pkgB.

May be involved in signaling events that underlie chemotaxis via the chemoattractant-mediated pkgB phosphorylation. The protein is Probable phosphatidylinositol phosphate kinase DDB_G0267588 of Dictyostelium discoideum (Social amoeba).